A 68-amino-acid chain; its full sequence is Riparin-1.5 amide (68 aa).

Residues 1-15 (MKIIVVLAVLMLVSA) form the signal peptide. Residues 16–41 (QVCLVSAAEMGHSSDNELSSRDLVKR) constitute a propeptide that is removed on maturation. Cys-47 and Cys-53 are joined by a disulfide. Cys-53 bears the Cysteine amide mark. Positions 57-68 (SIESSEGANGGE) are excised as a propeptide.

In terms of tissue distribution, expressed by the skin glands.

Its subcellular location is the secreted. The protein is Riparin-1.5 amide of Crinia riparia (Streambank froglet).